Here is a 21-residue protein sequence, read N- to C-terminus: QHSTDYDEVEDDRAKLHLDAR.

Residue Q1 is modified to Pyrrolidone carboxylic acid. Residues 1 to 11 show a composition bias toward acidic residues; that stretch reads QHSTDYDEVED. Residues 1-21 form a disordered region; it reads QHSTDYDEVEDDRAKLHLDAR. O-linked (GalNAc...) threonine glycosylation is present at T4. Y6 is modified (sulfotyrosine). Residues 12–21 are compositionally biased toward basic and acidic residues; that stretch reads DRAKLHLDAR.

Heterohexamer; disulfide linked. Contains 2 sets of 3 non-identical chains (alpha, beta and gamma). The 2 heterotrimers are in head to head conformation with the N-termini in a small central domain. In terms of processing, conversion of fibrinogen to fibrin is triggered by thrombin, which cleaves fibrinopeptides A and B from alpha and beta chains, and thus exposes the N-terminal polymerization sites responsible for the formation of the soft clot.

It localises to the secreted. Cleaved by the protease thrombin to yield monomers which, together with fibrinogen alpha (FGA) and fibrinogen gamma (FGG), polymerize to form an insoluble fibrin matrix. Fibrin has a major function in hemostasis as one of the primary components of blood clots. In addition, functions during the early stages of wound repair to stabilize the lesion and guide cell migration during re-epithelialization. Was originally thought to be essential for platelet aggregation, based on in vitro studies using anticoagulated blood. However subsequent studies have shown that it is not absolutely required for thrombus formation in vivo. Enhances expression of SELP in activated platelets. Maternal fibrinogen is essential for successful pregnancy. Fibrin deposition is also associated with infection, where it protects against IFNG-mediated hemorrhage. May also facilitate the antibacterial immune response via both innate and T-cell mediated pathways. The sequence is that of Fibrinogen beta chain (FGB) from Muntiacus muntjak (Barking deer).